A 398-amino-acid polypeptide reads, in one-letter code: Acetate kinase (398 aa).

Asn8 lines the Mg(2+) pocket. Lys15 provides a ligand contact to ATP. Arg89 is a binding site for substrate. The active-site Proton donor/acceptor is the Asp146. Residues 206 to 210 (HIGNG), 283 to 285 (DMR), and 331 to 335 (GMGEN) contribute to the ATP site. Glu383 serves as a coordination point for Mg(2+).

The protein belongs to the acetokinase family. In terms of assembly, homodimer. It depends on Mg(2+) as a cofactor. The cofactor is Mn(2+).

Its subcellular location is the cytoplasm. The catalysed reaction is acetate + ATP = acetyl phosphate + ADP. The protein operates within metabolic intermediate biosynthesis; acetyl-CoA biosynthesis; acetyl-CoA from acetate: step 1/2. Catalyzes the formation of acetyl phosphate from acetate and ATP. Can also catalyze the reverse reaction. In Streptococcus pyogenes serotype M5 (strain Manfredo), this protein is Acetate kinase.